The following is a 117-amino-acid chain: Zinc metalloproteinase/disintegrin (117 aa).

A Disintegrin domain is found at 36–117 (TPVSGNELLE…AGCPRNPFHA (82 aa)). Disulfide bonds link cysteine 50–cysteine 65, cysteine 52–cysteine 60, cysteine 59–cysteine 82, cysteine 73–cysteine 79, cysteine 78–cysteine 103, and cysteine 91–cysteine 110. The Cell attachment site signature appears at 95–97 (RGD).

It belongs to the venom metalloproteinase (M12B) family. P-II subfamily. P-IIa sub-subfamily. As to quaternary structure, monomer. Requires Zn(2+) as cofactor. In terms of tissue distribution, expressed by the venom gland.

The protein resides in the secreted. Functionally, impairs hemostasis in the envenomed animal. Inhibits platelet aggregation and bone resorption. This Gloydius halys (Chinese water mocassin) protein is Zinc metalloproteinase/disintegrin.